Here is a 280-residue protein sequence, read N- to C-terminus: Probable endonuclease 4 (280 aa).

Residues histidine 69, histidine 109, glutamate 145, aspartate 179, histidine 182, histidine 216, aspartate 229, histidine 231, and glutamate 261 each coordinate Zn(2+).

The protein belongs to the AP endonuclease 2 family. The cofactor is Zn(2+).

The enzyme catalyses Endonucleolytic cleavage to 5'-phosphooligonucleotide end-products.. Its function is as follows. Endonuclease IV plays a role in DNA repair. It cleaves phosphodiester bonds at apurinic or apyrimidinic (AP) sites, generating a 3'-hydroxyl group and a 5'-terminal sugar phosphate. This is Probable endonuclease 4 from Actinobacillus pleuropneumoniae serotype 5b (strain L20).